A 370-amino-acid chain; its full sequence is GTPase Obg (370 aa).

The Obg domain maps to 1 to 159 (MKFIDEARIE…RMLKLELKVL (159 aa)). The disordered stretch occupies residues 128–147 (LHFKSSTNRAPRQKTDGKPG). Residues 160–334 (ADVGLLGMPN…LCYAIYDYLS (175 aa)) enclose the OBG-type G domain. GTP contacts are provided by residues 166 to 173 (GMPNAGKS), 191 to 195 (FTTLA), 213 to 216 (DIPG), 284 to 287 (NKLD), and 315 to 317 (SAL). Positions 173 and 193 each coordinate Mg(2+).

This sequence belongs to the TRAFAC class OBG-HflX-like GTPase superfamily. OBG GTPase family. In terms of assembly, monomer. Requires Mg(2+) as cofactor.

Its subcellular location is the cytoplasm. Functionally, an essential GTPase which binds GTP, GDP and possibly (p)ppGpp with moderate affinity, with high nucleotide exchange rates and a fairly low GTP hydrolysis rate. Plays a role in control of the cell cycle, stress response, ribosome biogenesis and in those bacteria that undergo differentiation, in morphogenesis control. This is GTPase Obg from Burkholderia orbicola (strain MC0-3).